Here is a 308-residue protein sequence, read N- to C-terminus: Olfactory receptor 6F1 (308 aa).

Topologically, residues 1–25 (MDTGNKTLPQDFLLLGFPGSQTLQL) are extracellular. N5 is a glycosylation site (N-linked (GlcNAc...) asparagine). A helical membrane pass occupies residues 26 to 46 (SLFMLFLVMYILTVSGNVAIL). Residues 47–54 (MLVSTSHQ) are Cytoplasmic-facing. Residues 55–75 (LHTPMYFFLSNLSFLEIWYTT) form a helical membrane-spanning segment. The Extracellular portion of the chain corresponds to 76-99 (AAVPKALAILLGRSQTISFTSCLL). C97 and C189 are oxidised to a cystine. Residues 100 to 120 (QMYFVFSLGCTEYFLLAAMAY) traverse the membrane as a helical segment. Residues 121 to 139 (DRCLAICYPLHYGAIMSSL) are Cytoplasmic-facing. Residues 140–160 (LSAQLALGSWVCGFVAIAVPT) form a helical membrane-spanning segment. The Extracellular portion of the chain corresponds to 161–197 (ALISGLSFCGPRAINHFFCDIAPWIALACTNTQAVEL). Residues 198 to 217 (VAFVIAVVVILSSCLITFVS) form a helical membrane-spanning segment. The Cytoplasmic portion of the chain corresponds to 218–237 (YVYIISTILRIPSASGRSKA). A helical membrane pass occupies residues 238–258 (FSTCSSHLTVVLIWYGSTVFL). Topologically, residues 259–271 (HVRTSIKDALDLI) are extracellular. A helical membrane pass occupies residues 272 to 292 (KAVHVLNTVVTPVLNPFIYTL). Topologically, residues 293–308 (RNKEVRETLLKKWKGK) are cytoplasmic.

This sequence belongs to the G-protein coupled receptor 1 family.

Its subcellular location is the cell membrane. Odorant receptor. In Homo sapiens (Human), this protein is Olfactory receptor 6F1 (OR6F1).